We begin with the raw amino-acid sequence, 260 residues long: Carbonic anhydrase (260 aa).

The interval 1 to 31 is disordered; that stretch reads MAHAWGYGPADGPESWAESFPIANGPRQSPI. An Alpha-carbonic anhydrase domain is found at 3 to 259; the sequence is HAWGYGPADG…LKGRKVRASF (257 aa). Histidine 64 acts as the Proton acceptor in catalysis. Zn(2+) is bound by residues histidine 94, histidine 96, and histidine 119. Tyrosine 127 is a catalytic residue. 198–199 is a binding site for substrate; that stretch reads TT.

Belongs to the alpha-carbonic anhydrase family. Zn(2+) is required as a cofactor.

It catalyses the reaction hydrogencarbonate + H(+) = CO2 + H2O. In terms of biological role, reversible hydration of carbon dioxide. The polypeptide is Carbonic anhydrase (cahz) (Danio rerio (Zebrafish)).